The sequence spans 357 residues: 4-hydroxymandelate oxidase (357 aa).

The FMN hydroxy acid dehydrogenase domain maps to 1-357 (MTYVSLADLE…RRLNTKLGVV (357 aa)). Gln-126 contacts FMN. A 2-oxocarboxylate is bound at residue Tyr-128. Thr-154 lines the FMN pocket. Arg-163 is a binding site for a 2-oxocarboxylate. Lys-228 contacts FMN. Catalysis depends on His-252, which acts as the Proton acceptor. Residue Arg-255 participates in a 2-oxocarboxylate binding. Residues 283 to 287 (DGGIR) and 306 to 307 (GR) each bind FMN.

It belongs to the FMN-dependent alpha-hydroxy acid dehydrogenase family. FMN is required as a cofactor.

It carries out the reaction (S)-4-hydroxymandelate + O2 = 4-hydroxyphenylglyoxylate + H2O2. The protein operates within antibiotic biosynthesis; vancomycin biosynthesis. Its function is as follows. Catalyzes the oxidation of p-hydroxymandelate to p-hydroxybenzoylformate in the biosynthesis of L-(4-hydroxyphenyl)glycine and L-(3,5-dihydroxyphenyl)glycine, 2 non-proteinogenic amino acids occurring in the vancomycin group of antibiotics. The polypeptide is 4-hydroxymandelate oxidase (hmo) (Amycolatopsis orientalis (Nocardia orientalis)).